We begin with the raw amino-acid sequence, 337 residues long: DNA-directed RNA polymerase subunit alpha (337 aa).

The alpha N-terminal domain (alpha-NTD) stretch occupies residues 1–232 (MVREEVRVCT…IDLFIPFLHA (232 aa)). The alpha C-terminal domain (alpha-CTD) stretch occupies residues 266–337 (EISFQCIFID…FAIDLPKNKF (72 aa)).

The protein belongs to the RNA polymerase alpha chain family. In plastids the minimal PEP RNA polymerase catalytic core is composed of four subunits: alpha, beta, beta', and beta''. When a (nuclear-encoded) sigma factor is associated with the core the holoenzyme is formed, which can initiate transcription.

The protein resides in the plastid. Its subcellular location is the chloroplast. It carries out the reaction RNA(n) + a ribonucleoside 5'-triphosphate = RNA(n+1) + diphosphate. In terms of biological role, DNA-dependent RNA polymerase catalyzes the transcription of DNA into RNA using the four ribonucleoside triphosphates as substrates. The sequence is that of DNA-directed RNA polymerase subunit alpha from Buxus microphylla (Littleleaf boxwood).